A 308-amino-acid polypeptide reads, in one-letter code: Taste receptor type 2 member 43 (308 aa).

Methionine 1 is a topological domain (extracellular). The chain crosses the membrane as a helical span at residues 2-22 (ITFLPIIFSILVVVTFVIGNC). Residues 23–46 (ANGFIALVNSTEWVKRQKISFADQ) are Cytoplasmic-facing. Residues 47 to 67 (ILTALAVSRVGLLWVLLLNWY) traverse the membrane as a helical segment. Topologically, residues 68 to 86 (ATVLNPAFYSVEVRTIVYN) are extracellular. Residues 87–107 (LWAVINHFSNWLATSLSIFYL) form a helical membrane-spanning segment. Residues 108–126 (LKIANFSNLIFLHLKRRVK) lie on the Cytoplasmic side of the membrane. A helical transmembrane segment spans residues 127–147 (SVVLVILLGPLLFLVCHLFVV). Topologically, residues 148–178 (NMNEIVRTKEYEGNMTWKSKLRSAMYLSNTT) are extracellular. Residues asparagine 161 and asparagine 176 are each glycosylated (N-linked (GlcNAc...) asparagine). A helical transmembrane segment spans residues 179 to 199 (VTILANLVPFILTLISFLLLI). The Cytoplasmic portion of the chain corresponds to 200–229 (CSLCKHLKKMQLRDKGSQDPSTKVHIKALQ). Residues 230 to 249 (TVISLLLCVIYFLSIMISSW) form a helical membrane-spanning segment. The Extracellular portion of the chain corresponds to 250-258 (SLGRVENKA). A helical membrane pass occupies residues 259–279 (VFMFCKAIRFSYPSAHAFILI). Over 280–308 (WGNKKLKQTLLSVLWNVRYCVKGQKLPSP) the chain is Cytoplasmic.

Belongs to the G-protein coupled receptor T2R family.

It is found in the membrane. The protein localises to the cell projection. The protein resides in the cilium membrane. Its function is as follows. Gustducin-coupled receptor immplicated in the perception of bitter compounds in the oral cavity and the gastrointestinal tract. Signals through PLCB2 and the calcium-regulated cation channel TRPM5. Activated by the sulfonyl amide sweeteners saccharin and acesulfame K. In airway epithelial cells, binding of bitter compounds increases the intracellular calcium ion concentration and stimulates ciliary beat frequency. May act as chemosensory receptors in airway epithelial cells to detect and eliminate potential noxious agents from the airways. The polypeptide is Taste receptor type 2 member 43 (TAS2R43) (Papio hamadryas (Hamadryas baboon)).